We begin with the raw amino-acid sequence, 289 residues long: uncharacterized protein (289 aa).

Helical transmembrane passes span 4–24 (NLLA…GTVV), 44–64 (LNAL…LAYF), 68–88 (VALG…SLMF), 106–126 (IFWA…GRPL), 138–158 (IPVL…AEYV), 166–186 (ILGL…KAAV), 196–216 (GLIL…GTIV), 230–250 (LPAM…LVLG), and 258–278 (WEWI…IALS).

It localises to the cell membrane. This is an uncharacterized protein from Corynebacterium glutamicum (strain ATCC 13032 / DSM 20300 / JCM 1318 / BCRC 11384 / CCUG 27702 / LMG 3730 / NBRC 12168 / NCIMB 10025 / NRRL B-2784 / 534).